The primary structure comprises 206 residues: Small ribosomal subunit protein uS4 (206 aa).

The S4 RNA-binding domain maps to 96-156; it reads GRLDNVVYRM…EKAKKQSRVK (61 aa).

It belongs to the universal ribosomal protein uS4 family. As to quaternary structure, part of the 30S ribosomal subunit. Contacts protein S5. The interaction surface between S4 and S5 is involved in control of translational fidelity.

One of the primary rRNA binding proteins, it binds directly to 16S rRNA where it nucleates assembly of the body of the 30S subunit. Its function is as follows. With S5 and S12 plays an important role in translational accuracy. The protein is Small ribosomal subunit protein uS4 of Erwinia tasmaniensis (strain DSM 17950 / CFBP 7177 / CIP 109463 / NCPPB 4357 / Et1/99).